Reading from the N-terminus, the 679-residue chain is Glycine--tRNA ligase beta subunit (679 aa).

It belongs to the class-II aminoacyl-tRNA synthetase family. In terms of assembly, tetramer of two alpha and two beta subunits.

It is found in the cytoplasm. It carries out the reaction tRNA(Gly) + glycine + ATP = glycyl-tRNA(Gly) + AMP + diphosphate. In Streptococcus pyogenes serotype M4 (strain MGAS10750), this protein is Glycine--tRNA ligase beta subunit.